Consider the following 116-residue polypeptide: Ly-6/neurotoxin-like protein 1 (116 aa).

The N-terminal stretch at 1-20 (MTPLLTLILVVLMGLPLAQA) is a signal peptide. Residues 21–105 (LDCHVCAYNG…LATPATLALA (85 aa)) form the UPAR/Ly6 domain. Disulfide bonds link Cys23–Cys46, Cys26–Cys33, Cys39–Cys64, Cys68–Cys85, and Cys86–Cys91. A lipid anchor (GPI-anchor amidated asparagine) is attached at Asn92. Positions 93–116 (GAGLATPATLALAPILLATLWGLL) are cleaved as a propeptide — removed in mature form.

As to quaternary structure, interacts with nAChRs containing alpha-4:beta-2 (CHRNA4:CHRNB2) and alpha-7 (CHRNA7) subunits. Interacts with CHRNA4 probably in the endoplasmic reticulum prior to nAChR pentameric assembly. Interacts with KCNA2/Potassium voltage-gated channel subfamily A member 2.

Its subcellular location is the cell membrane. The protein localises to the cell projection. It is found in the dendrite. The protein resides in the endoplasmic reticulum. Acts in different tissues through interaction to nicotinic acetylcholine receptors (nAChRs). The proposed role as modulator of nAChR activity seems to be dependent on the nAChR subtype and stoichiometry, and to involve an effect on nAChR trafficking and its cell surface expression, and on single channel properties of the nAChR inserted in the plasma membrane. Modulates functional properties of nicotinic acetylcholine receptors (nAChRs) to prevent excessive excitation, and hence neurodegeneration. Enhances desensitization by increasing both the rate and extent of desensitization of alpha-4:beta-2-containing nAChRs and slowing recovery from desensitization. Promotes large amplitude ACh-evoked currents through alpha-4:beta-2 nAChRs. Is involved in regulation of the nAChR pentameric assembly in the endoplasmic reticulum. Shifts stoichiometry from high sensitivity alpha-4(2):beta-2(3) to low sensitivity alpha-4(3):beta-2(2) nAChR. In vitro modulates alpha-3:beta-4-containing nAChRs. Reduces cell surface expression of (alpha-3:beta-4)(2):beta-4 and (alpha-3:beta-4)(2):alpha-5 nAChRs suggesting an interaction with nAChR alpha-3(-):(+)beta-4 subunit interfaces and an allosteric mode. Corresponding single channel effects characterized by decreased unitary conductance, altered burst proportions and enhanced desensitization/inactivation seem to depend on nAChR alpha:alpha subunit interfaces and are greater in (alpha-3:beta-2)(2):alpha-3 when compared to (alpha-3:beta-2)(2):alpha-5 nAChRs. Prevents plasticity in the primary visual cortex late in life. This Pan troglodytes (Chimpanzee) protein is Ly-6/neurotoxin-like protein 1.